A 298-amino-acid polypeptide reads, in one-letter code: ADP-ribosylation factor GTPase-activating protein effector protein 2 (298 aa).

An N-acetylserine modification is found at Ser2. In terms of domain architecture, Arf-GAP spans 8 to 130 (KKALSALLRD…KWIGDLSSIE (123 aa)). Residues 23-47 (CADCKAQLHPRWASWSLGVFICIKC) form a C4-type zinc finger. The segment at 137–180 (EPVLHKPSANHSLPASNARLDQSSNSLQKTQTQPPSHLLSTSRS) is disordered. Positions 145–171 (ANHSLPASNARLDQSSNSLQKTQTQPP) are enriched in polar residues. Residues Ser180, Ser183, and Ser207 each carry the phosphoserine modification.

Its subcellular location is the cytoplasm. The protein resides in the golgi apparatus. In terms of biological role, GTPase-activating protein for the ADP ribosylation factor family. The sequence is that of ADP-ribosylation factor GTPase-activating protein effector protein 2 (AGE2) from Saccharomyces cerevisiae (strain ATCC 204508 / S288c) (Baker's yeast).